The sequence spans 691 residues: Gex-3-interacting protein 13 (691 aa).

Disordered stretches follow at residues 18–97 and 171–195; these read TASL…SAHL and PASP…KRQR. The span at 31–46 shows a compositional bias: low complexity; it reads SSFTTTSESTSPPYSS. Over residues 47-57 the composition is skewed to basic and acidic residues; the sequence is SEHHSPTDQRT. The segment covering 58 to 79 has biased composition (polar residues); the sequence is ETPTSDSGNASFSPENVATSFE. Residues 171–183 show a composition bias toward low complexity; sequence PASPCTTAASAPS. BED-type zinc fingers lie at residues 194 to 242 and 424 to 473; these read QRRN…YEKV and LRRH…YEKV. 8 residues coordinate Zn(2+): C212, C215, H230, H235, C443, C446, H461, and H466.

As to quaternary structure, interacts with gex-3.

The chain is Gex-3-interacting protein 13 (gei-13) from Caenorhabditis elegans.